The sequence spans 187 residues: Ribosome-recycling factor (187 aa).

This sequence belongs to the RRF family.

The protein localises to the cytoplasm. Functionally, responsible for the release of ribosomes from messenger RNA at the termination of protein biosynthesis. May increase the efficiency of translation by recycling ribosomes from one round of translation to another. In Xanthobacter autotrophicus (strain ATCC BAA-1158 / Py2), this protein is Ribosome-recycling factor.